The following is a 365-amino-acid chain: Methylthioribose-1-phosphate isomerase (365 aa).

The active-site Proton donor is the aspartate 255.

The protein belongs to the eIF-2B alpha/beta/delta subunits family. MtnA subfamily.

It localises to the cytoplasm. The protein resides in the nucleus. The catalysed reaction is 5-(methylsulfanyl)-alpha-D-ribose 1-phosphate = 5-(methylsulfanyl)-D-ribulose 1-phosphate. It participates in amino-acid biosynthesis; L-methionine biosynthesis via salvage pathway; L-methionine from S-methyl-5-thio-alpha-D-ribose 1-phosphate: step 1/6. Functionally, catalyzes the interconversion of methylthioribose-1-phosphate (MTR-1-P) into methylthioribulose-1-phosphate (MTRu-1-P). This Drosophila willistoni (Fruit fly) protein is Methylthioribose-1-phosphate isomerase.